The following is a 140-amino-acid chain: Nucleoside diphosphate kinase (140 aa).

ATP is bound by residues Lys-11, Phe-59, Arg-87, Thr-93, Arg-104, and Asn-114. The active-site Pros-phosphohistidine intermediate is the His-117.

This sequence belongs to the NDK family. In terms of assembly, homotetramer. Requires Mg(2+) as cofactor.

The protein localises to the cytoplasm. It catalyses the reaction a 2'-deoxyribonucleoside 5'-diphosphate + ATP = a 2'-deoxyribonucleoside 5'-triphosphate + ADP. The catalysed reaction is a ribonucleoside 5'-diphosphate + ATP = a ribonucleoside 5'-triphosphate + ADP. In terms of biological role, major role in the synthesis of nucleoside triphosphates other than ATP. The ATP gamma phosphate is transferred to the NDP beta phosphate via a ping-pong mechanism, using a phosphorylated active-site intermediate. This is Nucleoside diphosphate kinase from Rickettsia prowazekii (strain Madrid E).